Here is a 301-residue protein sequence, read N- to C-terminus: CPX chromosomal region candidate gene 1 protein (301 aa).

The disordered stretch occupies residues 1–77 (MSYPTKEGSD…ENSELETEIQ (77 aa)). Residues 44 to 60 (VETNPINREPGTATSQE) are compositionally biased toward polar residues.

Expressed in a variety of fetal tissues.

This is CPX chromosomal region candidate gene 1 protein (CPXCR1) from Homo sapiens (Human).